A 182-amino-acid polypeptide reads, in one-letter code: Ribulose bisphosphate carboxylase small subunit, chloroplastic 6 (182 aa).

A chloroplast-targeting transit peptide spans 1–41; that stretch reads MAATMMSKTIISSKQCSKPIAPPKVSINKGFVNTSAAIKNR.

It belongs to the RuBisCO small chain family. As to quaternary structure, heterohexadecamer of 8 large and 8 small subunits.

The protein resides in the plastid. Its subcellular location is the chloroplast. RuBisCO catalyzes two reactions: the carboxylation of D-ribulose 1,5-bisphosphate, the primary event in carbon dioxide fixation, as well as the oxidative fragmentation of the pentose substrate. Both reactions occur simultaneously and in competition at the same active site. Although the small subunit is not catalytic it is essential for maximal activity. This is Ribulose bisphosphate carboxylase small subunit, chloroplastic 6 from Acetabularia peniculus (Green alga).